The sequence spans 637 residues: Glutamate--cysteine ligase catalytic subunit (637 aa).

Position 1 is an N-acetylmethionine (Met-1). Phosphoserine is present on residues Ser-5 and Ser-8.

This sequence belongs to the glutamate--cysteine ligase type 3 family. Heterodimer of a catalytic heavy chain and a regulatory light chain.

It carries out the reaction L-cysteine + L-glutamate + ATP = gamma-L-glutamyl-L-cysteine + ADP + phosphate + H(+). The enzyme catalyses (2S)-2-aminobutanoate + L-glutamate + ATP = gamma-L-glutamyl-(2S)-2-aminobutanoate + ADP + phosphate + H(+). It participates in sulfur metabolism; glutathione biosynthesis; glutathione from L-cysteine and L-glutamate: step 1/2. Feedback inhibition by glutathione. Functionally, catalyzes the ATP-dependent ligation of L-glutamate and L-cysteine and participates in the first and rate-limiting step in glutathione biosynthesis. This is Glutamate--cysteine ligase catalytic subunit from Mus musculus (Mouse).